Consider the following 587-residue polypeptide: 5-aminolevulinate synthase, erythroid-specific, mitochondrial (587 aa).

A mitochondrion-targeting transit peptide spans 1 to 49; that stretch reads MVAAAMLLRSCPVLSQGPTGLLGKVAKTYQFLFSIGRCPILATQGPTCS. Succinyl-CoA is bound at residue Arg163. Cys258 and Phe259 together coordinate pyridoxal 5'-phosphate. The succinyl-CoA site is built by Ser280 and Lys299. Positions 332, 360, and 388 each coordinate pyridoxal 5'-phosphate. Lys391 is an active-site residue. Residue Lys391 is modified to N6-(pyridoxal phosphate)lysine. Pyridoxal 5'-phosphate contacts are provided by Thr420 and Thr421. Thr508 is a binding site for succinyl-CoA.

This sequence belongs to the class-II pyridoxal-phosphate-dependent aminotransferase family. As to quaternary structure, homodimer. Interacts with SUCLA2. Requires pyridoxal 5'-phosphate as cofactor. As to expression, predomnantly expressed in erythroid cells.

The protein localises to the mitochondrion inner membrane. It localises to the mitochondrion. It catalyses the reaction succinyl-CoA + glycine + H(+) = 5-aminolevulinate + CO2 + CoA. It functions in the pathway porphyrin-containing compound metabolism; protoporphyrin-IX biosynthesis; 5-aminolevulinate from glycine: step 1/1. Functionally, catalyzes the pyridoxal 5'-phosphate (PLP)-dependent condensation of succinyl-CoA and glycine to form aminolevulinic acid (ALA), with CoA and CO2 as by-products. Contributes significantly to heme formation during erythropoiesis. The sequence is that of 5-aminolevulinate synthase, erythroid-specific, mitochondrial (Alas2) from Mus musculus (Mouse).